The chain runs to 175 residues: Shikimate kinase (175 aa).

14–19 (GAGKST) contacts ATP. Ser18 is a binding site for Mg(2+). Substrate contacts are provided by Asp36, Arg60, and Gly82. Arg120 contributes to the ATP binding site. Arg140 provides a ligand contact to substrate. Gln157 lines the ATP pocket.

This sequence belongs to the shikimate kinase family. Monomer. Requires Mg(2+) as cofactor.

The protein resides in the cytoplasm. The catalysed reaction is shikimate + ATP = 3-phosphoshikimate + ADP + H(+). It participates in metabolic intermediate biosynthesis; chorismate biosynthesis; chorismate from D-erythrose 4-phosphate and phosphoenolpyruvate: step 5/7. Functionally, catalyzes the specific phosphorylation of the 3-hydroxyl group of shikimic acid using ATP as a cosubstrate. This chain is Shikimate kinase, found in Pasteurella multocida (strain Pm70).